Reading from the N-terminus, the 360-residue chain is Phospho-N-acetylmuramoyl-pentapeptide-transferase (360 aa).

The next 10 helical transmembrane spans lie at 25 to 45, 73 to 93, 97 to 117, 134 to 154, 168 to 188, 199 to 219, 236 to 256, 263 to 283, 288 to 308, and 338 to 358; these read RGILGVLTALSLALWLGPWMI, TMGGALILSAIAVSTLLWADL, YVWVVLIVTLAFGAIGWVDDY, YFWQSVFGLAAAVFLYKTAPT, VTIPLGVGFVVLTYFVIVGSS, GLAIMPTVMVGGALGIFCYLS, SGELIVFCGALIGAGLGFLWF, VFMGDVGALALGAALGTIAVI, IVLFIMGGIFVVETLSVVIQV, and VIVRFWIITVILVLIGLATLK.

The protein belongs to the glycosyltransferase 4 family. MraY subfamily. The cofactor is Mg(2+).

The protein resides in the cell inner membrane. The catalysed reaction is UDP-N-acetyl-alpha-D-muramoyl-L-alanyl-gamma-D-glutamyl-meso-2,6-diaminopimeloyl-D-alanyl-D-alanine + di-trans,octa-cis-undecaprenyl phosphate = di-trans,octa-cis-undecaprenyl diphospho-N-acetyl-alpha-D-muramoyl-L-alanyl-D-glutamyl-meso-2,6-diaminopimeloyl-D-alanyl-D-alanine + UMP. It participates in cell wall biogenesis; peptidoglycan biosynthesis. In terms of biological role, catalyzes the initial step of the lipid cycle reactions in the biosynthesis of the cell wall peptidoglycan: transfers peptidoglycan precursor phospho-MurNAc-pentapeptide from UDP-MurNAc-pentapeptide onto the lipid carrier undecaprenyl phosphate, yielding undecaprenyl-pyrophosphoryl-MurNAc-pentapeptide, known as lipid I. This chain is Phospho-N-acetylmuramoyl-pentapeptide-transferase, found in Pseudomonas putida (strain ATCC 700007 / DSM 6899 / JCM 31910 / BCRC 17059 / LMG 24140 / F1).